A 418-amino-acid polypeptide reads, in one-letter code: Gamma-glutamyl phosphate reductase (418 aa).

This sequence belongs to the gamma-glutamyl phosphate reductase family.

The protein localises to the cytoplasm. It catalyses the reaction L-glutamate 5-semialdehyde + phosphate + NADP(+) = L-glutamyl 5-phosphate + NADPH + H(+). It functions in the pathway amino-acid biosynthesis; L-proline biosynthesis; L-glutamate 5-semialdehyde from L-glutamate: step 2/2. Functionally, catalyzes the NADPH-dependent reduction of L-glutamate 5-phosphate into L-glutamate 5-semialdehyde and phosphate. The product spontaneously undergoes cyclization to form 1-pyrroline-5-carboxylate. The chain is Gamma-glutamyl phosphate reductase from Desulfatibacillum aliphaticivorans.